The primary structure comprises 503 residues: TGF-beta receptor type-1 (503 aa).

An N-terminal signal peptide occupies residues 1–29 (MEAAAAAPRRPQLLIVLVAAATLLPGAKA). The Extracellular portion of the chain corresponds to 30–126 (LQCFCHLCTK…QSAGLGPVEL (97 aa)). Cystine bridges form between Cys-32/Cys-50, Cys-34/Cys-37, Cys-44/Cys-67, Cys-82/Cys-96, and Cys-97/Cys-102. N-linked (GlcNAc...) asparagine glycosylation occurs at Asn-41. Residues 127 to 147 (AAVIAGPVCFVCIALMLMVYI) form a helical membrane-spanning segment. The Cytoplasmic segment spans residues 148–503 (CHNRTVIHHR…QLSQQEGIKM (356 aa)). Ser-165 is modified (phosphoserine). The GS domain maps to 175-204 (TTLKDLIYDMTTSGSGSGLPLLVQRTIART). Phosphothreonine; by TGFBR2 is present on residues Thr-185 and Thr-186. 3 positions are modified to phosphoserine; by TGFBR2: Ser-187, Ser-189, and Ser-191. The short motif at 193–194 (LP) is the FKBP1A-binding element. A Protein kinase domain is found at 205 to 495 (IVLQESIGKG…LRIKKTLSQL (291 aa)). ATP contacts are provided by residues 211–219 (IGKGRFGEV) and Lys-232. Lys-268 participates in a covalent cross-link: Glycyl lysine isopeptide (Lys-Gly) (interchain with G-Cter in ubiquitin). The active-site Proton acceptor is Asp-333. Lys-391 is covalently cross-linked (Glycyl lysine isopeptide (Lys-Gly) (interchain with G-Cter in SUMO)).

It belongs to the protein kinase superfamily. TKL Ser/Thr protein kinase family. TGFB receptor subfamily. In terms of assembly, homodimer; in the endoplasmic reticulum but also at the cell membrane. Heterohexamer; TGFB1, TGFB2 and TGFB3 homodimeric ligands assemble a functional receptor composed of two TGFBR1 and TGFBR2 heterodimers to form a ligand-receptor heterohexamer. The respective affinity of TGBRB1 and TGFBR2 for the ligands may modulate the kinetics of assembly of the receptor and may explain the different biological activities of TGFB1, TGFB2 and TGFB3. Component of a complex composed of TSC22D1 (via N-terminus), TGFBR1 and TGFBR2; the interaction between TSC22D1 and TGFBR1 is inhibited by SMAD7 and promoted by TGFB1. Interacts with CD109; inhibits TGF-beta receptor activation in keratinocytes. Interacts with RBPMS. Interacts (unphosphorylated) with FKBP1A; prevents TGFBR1 phosphorylation by TGFBR2 and stabilizes it in the inactive conformation. Interacts with SMAD2, SMAD3 and ZFYVE9; ZFYVE9 recruits SMAD2 and SMAD3 to the TGF-beta receptor. Interacts with TRAF6 and MAP3K7; induces MAP3K7 activation by TRAF6. Interacts with PARD6A; involved in TGF-beta induced epithelial to mesenchymal transition. Interacts with NEDD4L. Interacts with SMAD7, SMURF1 and SMURF2; SMAD7 recruits NEDD4L, SMURF1 and SMURF2 to the TGF-beta receptor. Interacts with USP15 and VPS39. Interacts with SDCBP (via C-terminus). Interacts with CAV1 and this interaction is impaired in the presence of SDCBP. Interacts with APPL1; interaction is TGF beta dependent; mediates trafficking of the TGFBR1 from the endosomes to the nucleus via microtubules in a TRAF6-dependent manner. Interacts with GPR50; this interaction promotes the constitutive activation of SMAD signaling pathway. Mg(2+) serves as cofactor. Requires Mn(2+) as cofactor. Post-translationally, phosphorylated at basal levels in the absence of ligand. Activated upon phosphorylation by TGFBR2, mainly in the GS domain. Phosphorylation in the GS domain abrogates FKBP1A-binding. N-Glycosylated. In terms of processing, ubiquitinated; undergoes ubiquitination catalyzed by several E3 ubiquitin ligases including SMURF1, SMURF2 and NEDD4L2. Results in the proteasomal and/or lysosomal degradation of the receptor thereby negatively regulating its activity. Deubiquitinated by USP15, leading to stabilization of the protein and enhanced TGF-beta signal. Its ubiquitination and proteasome-mediated degradation is negatively regulated by SDCBP. Ubiquitinated by BFAR via'Lys-63'-linked ubiquitination at Lys-268, leading to TGF-beta signaling activation.

Its subcellular location is the cell membrane. It localises to the cell junction. The protein resides in the tight junction. It is found in the membrane raft. The protein localises to the cell surface. It catalyses the reaction L-threonyl-[receptor-protein] + ATP = O-phospho-L-threonyl-[receptor-protein] + ADP + H(+). The enzyme catalyses L-seryl-[receptor-protein] + ATP = O-phospho-L-seryl-[receptor-protein] + ADP + H(+). Kept in an inactive conformation by FKBP1A preventing receptor activation in absence of ligand. CD109 is another inhibitor of the receptor. In terms of biological role, transmembrane serine/threonine kinase forming with the TGF-beta type II serine/threonine kinase receptor, TGFBR2, the non-promiscuous receptor for the TGF-beta cytokines TGFB1, TGFB2 and TGFB3. Transduces the TGFB1, TGFB2 and TGFB3 signal from the cell surface to the cytoplasm and is thus regulating a plethora of physiological and pathological processes including cell cycle arrest in epithelial and hematopoietic cells, control of mesenchymal cell proliferation and differentiation, wound healing, extracellular matrix production, immunosuppression and carcinogenesis. The formation of the receptor complex composed of 2 TGFBR1 and 2 TGFBR2 molecules symmetrically bound to the cytokine dimer results in the phosphorylation and the activation of TGFBR1 by the constitutively active TGFBR2. Activated TGFBR1 phosphorylates SMAD2 which dissociates from the receptor and interacts with SMAD4. The SMAD2-SMAD4 complex is subsequently translocated to the nucleus where it modulates the transcription of the TGF-beta-regulated genes. This constitutes the canonical SMAD-dependent TGF-beta signaling cascade. Also involved in non-canonical, SMAD-independent TGF-beta signaling pathways. For instance, TGFBR1 induces TRAF6 autoubiquitination which in turn results in MAP3K7 ubiquitination and activation to trigger apoptosis. Also regulates epithelial to mesenchymal transition through a SMAD-independent signaling pathway through PARD6A phosphorylation and activation. This is TGF-beta receptor type-1 (Tgfbr1) from Mus musculus (Mouse).